A 598-amino-acid polypeptide reads, in one-letter code: Elongation factor 4 (598 aa).

One can recognise a tr-type G domain in the interval 4–181 (KKIRNFAIIA…AIVNLIPPPQ (178 aa)). GTP is bound by residues 16-21 (DHGKST) and 128-131 (NKID).

Belongs to the TRAFAC class translation factor GTPase superfamily. Classic translation factor GTPase family. LepA subfamily.

The protein resides in the cell membrane. It catalyses the reaction GTP + H2O = GDP + phosphate + H(+). Required for accurate and efficient protein synthesis under certain stress conditions. May act as a fidelity factor of the translation reaction, by catalyzing a one-codon backward translocation of tRNAs on improperly translocated ribosomes. Back-translocation proceeds from a post-translocation (POST) complex to a pre-translocation (PRE) complex, thus giving elongation factor G a second chance to translocate the tRNAs correctly. Binds to ribosomes in a GTP-dependent manner. This is Elongation factor 4 from Mesomycoplasma hyopneumoniae (strain J / ATCC 25934 / NCTC 10110) (Mycoplasma hyopneumoniae).